The sequence spans 526 residues: Peptide chain release factor 3 (526 aa).

The tr-type G domain occupies 8-277 (GKRRTFAIIS…GLTDWAPAPQ (270 aa)). GTP contacts are provided by residues 17–24 (SHPDAGKT), 85–89 (DTPGH), and 139–142 (NKLD).

It belongs to the TRAFAC class translation factor GTPase superfamily. Classic translation factor GTPase family. PrfC subfamily.

The protein localises to the cytoplasm. Increases the formation of ribosomal termination complexes and stimulates activities of RF-1 and RF-2. It binds guanine nucleotides and has strong preference for UGA stop codons. It may interact directly with the ribosome. The stimulation of RF-1 and RF-2 is significantly reduced by GTP and GDP, but not by GMP. This chain is Peptide chain release factor 3, found in Aliivibrio fischeri (strain ATCC 700601 / ES114) (Vibrio fischeri).